The chain runs to 123 residues: Small ribosomal subunit protein uS12 (123 aa).

The residue at position 89 (aspartate 89) is a 3-methylthioaspartic acid. Residues 100-123 are disordered; that stretch reads GSLDTSGVKDRKQGRSKYGTKRPK. A compositionally biased stretch (basic residues) spans 113–123; sequence GRSKYGTKRPK.

It belongs to the universal ribosomal protein uS12 family. As to quaternary structure, part of the 30S ribosomal subunit. Contacts proteins S8 and S17. May interact with IF1 in the 30S initiation complex.

Its function is as follows. With S4 and S5 plays an important role in translational accuracy. Interacts with and stabilizes bases of the 16S rRNA that are involved in tRNA selection in the A site and with the mRNA backbone. Located at the interface of the 30S and 50S subunits, it traverses the body of the 30S subunit contacting proteins on the other side and probably holding the rRNA structure together. The combined cluster of proteins S8, S12 and S17 appears to hold together the shoulder and platform of the 30S subunit. The polypeptide is Small ribosomal subunit protein uS12 (Ectopseudomonas mendocina (strain ymp) (Pseudomonas mendocina)).